Reading from the N-terminus, the 123-residue chain is Large ribosomal subunit protein uL24 (123 aa).

This sequence belongs to the universal ribosomal protein uL24 family. In terms of assembly, part of the 50S ribosomal subunit.

In terms of biological role, one of two assembly initiator proteins, it binds directly to the 5'-end of the 23S rRNA, where it nucleates assembly of the 50S subunit. Functionally, located at the polypeptide exit tunnel on the outside of the subunit. The polypeptide is Large ribosomal subunit protein uL24 (Pyrobaculum islandicum (strain DSM 4184 / JCM 9189 / GEO3)).